The sequence spans 439 residues: Sorting nexin-31 (439 aa).

Positions 1–109 (MKMHFCIPVS…EFLTLVQLHT (109 aa)) constitute a PX domain. A disordered region spans residues 384–409 (TEQSPEMQIEVPEQGRSKKHPSQPSQ).

It belongs to the sorting nexin family. As to quaternary structure, interacts with CCDC22, CCDC93, VPS26C and VPS35L, associates with the retriever and CCC complexes.

In terms of biological role, may be involved in protein trafficking. In Mus musculus (Mouse), this protein is Sorting nexin-31 (Snx31).